Consider the following 290-residue polypeptide: 33 kDa chaperonin (290 aa).

Disulfide bonds link Cys235/Cys237 and Cys268/Cys271.

Belongs to the HSP33 family. Under oxidizing conditions two disulfide bonds are formed involving the reactive cysteines. Under reducing conditions zinc is bound to the reactive cysteines and the protein is inactive.

Its subcellular location is the cytoplasm. Redox regulated molecular chaperone. Protects both thermally unfolding and oxidatively damaged proteins from irreversible aggregation. Plays an important role in the bacterial defense system toward oxidative stress. This is 33 kDa chaperonin from Streptococcus pyogenes serotype M4 (strain MGAS10750).